The following is a 425-amino-acid chain: Rho GTPase-activating protein 8 (425 aa).

Residues 13–168 (PFYDVARHGI…EVVRYDEKLQ (156 aa)) form the CRAL-TRIO domain. A disordered region spans residues 169–192 (NLHKGQPPPPTKTPPPRPPLPTQQ). Residues 174-189 (QPPPPTKTPPPRPPLP) show a composition bias toward pro residues. Positions 195 to 381 (VSLQYLRDKN…LLIEYYDKVF (187 aa)) constitute a Rho-GAP domain.

As to expression, highly expressed in skeletal muscle, lung and testis, and at lower levels in kidney, stomach and colon. Not detected in heart, liver, spleen, breast, brain, neonatal head or pancreas.

GTPase activator for the Rho-type GTPases by converting them to an inactive GDP-bound state. This is Rho GTPase-activating protein 8 (Arhgap8) from Mus musculus (Mouse).